We begin with the raw amino-acid sequence, 689 residues long: Protein SDA1 homolog (689 aa).

Disordered stretches follow at residues 227 to 260, 485 to 512, and 623 to 689; these read DEKKDSDSESEDEGPTARDLMVRYSTGKKNTKNK, EQEKKEEPEEDDGWESASLSDDDEDGEW, and TDRK…RLMK. Residues 258–319 are a coiled coil; sequence KNKKKLDKAM…RFEVKLMHMD (62 aa). Acidic residues predominate over residues 492-512; sequence PEEDDGWESASLSDDDEDGEW. Basic and acidic residues predominate over residues 670-681; the sequence is RDKQIALRDSLL.

This sequence belongs to the SDA1 family.

It is found in the nucleus. The protein resides in the nucleolus. Functionally, required for 60S pre-ribosomal subunits export to the cytoplasm. The polypeptide is Protein SDA1 homolog (sdad1) (Xenopus laevis (African clawed frog)).